The primary structure comprises 323 residues: Mediator of RNA polymerase II transcription subunit 4 (323 aa).

Positions 1–36 are disordered; the sequence is MLPFKKADSPFKSNPVSRVGSSTRLNQLGNIKSNPT. The segment covering 11–36 has biased composition (polar residues); the sequence is FKSNPVSRVGSSTRLNQLGNIKSNPT. Residues 79–167 adopt a coiled-coil conformation; sequence MVQKVNEYER…VSYRNELKKL (89 aa). Basic and acidic residues-rich tracts occupy residues 241-262 and 282-303; these read HELGETDKENSNEVKTESKVDH and DEQRSKPPAASEHDTSKRKEEQ. Residues 241–323 form a disordered region; sequence HELGETDKEN…LFDPDDEYSD (83 aa).

Belongs to the Mediator complex subunit 4 family. In terms of assembly, component of the Mediator complex.

The protein localises to the nucleus. Component of the Mediator complex, a coactivator involved in the regulated transcription of nearly all RNA polymerase II-dependent genes. Mediator functions as a bridge to convey information from gene-specific regulatory proteins to the basal RNA polymerase II transcription machinery. Mediator is recruited to promoters by direct interactions with regulatory proteins and serves as a scaffold for the assembly of a functional preinitiation complex with RNA polymerase II and the general transcription factors. The polypeptide is Mediator of RNA polymerase II transcription subunit 4 (MED4) (Candida albicans (strain SC5314 / ATCC MYA-2876) (Yeast)).